A 190-amino-acid polypeptide reads, in one-letter code: Major sperm protein 32 (190 aa).

The region spanning 72-189 is the MSP domain; that stretch reads MIQTQPGTKI…RRKNLPIEYN (118 aa).

In terms of tissue distribution, sperm.

The protein resides in the cell projection. The protein localises to the pseudopodium. It is found in the cytoplasm. Its subcellular location is the cytoskeleton. Functionally, central component in molecular interactions underlying sperm crawling. Forms an extensive filament system that extends from sperm villipoda, along the leading edge of the pseudopod. The protein is Major sperm protein 32 (msp-32) of Caenorhabditis elegans.